The following is a 57-amino-acid chain: uncharacterized protein (57 aa).

This is an uncharacterized protein from His1 virus (isolate Australia/Victoria) (His1V).